We begin with the raw amino-acid sequence, 467 residues long: Matrix metalloproteinase-18 (467 aa).

A signal peptide spans 1 to 17 (MNSLLLKLLLCVAITAA). Positions 18–99 (FPADKQDEPP…PRCGVYDVGQ (82 aa)) are excised as a propeptide. The Cysteine switch motif lies at 90–97 (PRCGVYDV). Residues Cys-92 and His-218 each coordinate Zn(2+). Glu-219 is a catalytic residue. Zn(2+) is bound by residues His-222 and His-228. Hemopexin repeat units lie at residues 277 to 326 (PSRC…WPSL), 327 to 373 (PTNI…GFPK), 375 to 423 (VKRI…FPGI), and 424 to 467 (PDKI…WLGC). Cysteines 280 and 467 form a disulfide.

This sequence belongs to the peptidase M10A family. It depends on Zn(2+) as a cofactor. The cofactor is Ca(2+). As to expression, expressed only transiently in whole animal, at time when tadpole feeding begins.

The protein localises to the secreted. Its subcellular location is the extracellular space. It is found in the extracellular matrix. Up-regulated in the tail by thyroid hormone. Its function is as follows. Cleaves collagen type I. May play a role in larval tissue degeneration and adult organogenesis during amphibian metamorphosis. May be involved in tail resorption. The chain is Matrix metalloproteinase-18 (mmp18) from Xenopus laevis (African clawed frog).